The primary structure comprises 155 residues: Deoxyuridine 5'-triphosphate nucleotidohydrolase (155 aa).

Substrate is bound by residues 72–74, Asn85, 89–91, and Lys99; these read RSG and TVD.

This sequence belongs to the dUTPase family. The cofactor is Mg(2+).

The enzyme catalyses dUTP + H2O = dUMP + diphosphate + H(+). The protein operates within pyrimidine metabolism; dUMP biosynthesis; dUMP from dCTP (dUTP route): step 2/2. In terms of biological role, this enzyme is involved in nucleotide metabolism: it produces dUMP, the immediate precursor of thymidine nucleotides and it decreases the intracellular concentration of dUTP so that uracil cannot be incorporated into DNA. This is Deoxyuridine 5'-triphosphate nucleotidohydrolase from Parvibaculum lavamentivorans (strain DS-1 / DSM 13023 / NCIMB 13966).